Reading from the N-terminus, the 57-residue chain is UPF0391 membrane protein RPD_2934 (57 aa).

The next 2 membrane-spanning stretches (helical) occupy residues 6–26 and 35–55; these read WALI…TGVS and ILFY…FTIF.

The protein belongs to the UPF0391 family.

It localises to the cell membrane. The chain is UPF0391 membrane protein RPD_2934 from Rhodopseudomonas palustris (strain BisB5).